Reading from the N-terminus, the 223-residue chain is Killer cell lectin-like receptor subfamily B member 1B allele B (223 aa).

Over 1–45 (MDTAVVYADLHLARTGEPKHKSPPSLSPDTCQCPRWHRLALKLGC) the chain is Cytoplasmic. Positions 5–10 (VVYADL) match the ITIM motif motif. Residues 31–34 (CQCP) carry the LCK-binding motif motif. Residues 46 to 66 (ACLILLVLSVIGLGVLVLTLL) traverse the membrane as a helical; Signal-anchor for type II membrane protein segment. Over 67–223 (QKPLIQNSPA…LKCECMCNGS (157 aa)) the chain is Extracellular. The C-type lectin domain maps to 101–211 (HQDKCFHVSQ…CDSDNLWICQ (111 aa)). 2 disulfide bridges follow: cysteine 122/cysteine 210 and cysteine 189/cysteine 202.

Homodimer; disulfide-linked. Interacts with tyrosine kinase LCK. Binds PTPN6/SHP-1 in a phosphorylation-dependent manner. In terms of tissue distribution, expressed in a subset of natural killer cells.

The protein resides in the membrane. Functionally, receptor for CLEC2D/OCIL. Ligand-binding contributes to inhibition of cytotoxic natural killer (NK) cells. May mediate MHC class I-independent 'missing-self' recognition of allografts, tumor cells and virus-infected cells. The polypeptide is Killer cell lectin-like receptor subfamily B member 1B allele B (Rattus norvegicus (Rat)).